A 330-amino-acid polypeptide reads, in one-letter code: DNA primase small subunit PriS (330 aa).

Catalysis depends on residues D101 and D103. The Zn(2+) site is built by C116, C119, C128, and D131. D235 is a catalytic residue.

The protein belongs to the eukaryotic-type primase small subunit family. Heterodimer of a small subunit (PriS) and a large subunit (PriL). Mg(2+) is required as a cofactor. It depends on Mn(2+) as a cofactor.

Catalytic subunit of DNA primase, an RNA polymerase that catalyzes the synthesis of short RNA molecules used as primers for DNA polymerase during DNA replication. The small subunit contains the primase catalytic core and has DNA synthesis activity on its own. Binding to the large subunit stabilizes and modulates the activity, increasing the rate of DNA synthesis while decreasing the length of the DNA fragments, and conferring RNA synthesis capability. The DNA polymerase activity may enable DNA primase to also catalyze primer extension after primer synthesis. May also play a role in DNA repair. Possesses a template-independent 3'-terminal nucleotidyl transferase activity. The sequence is that of DNA primase small subunit PriS from Saccharolobus solfataricus (strain ATCC 35092 / DSM 1617 / JCM 11322 / P2) (Sulfolobus solfataricus).